The following is a 377-amino-acid chain: uncharacterized protein (377 aa).

The first 22 residues, 1–22 (MKFKYGTVVLGSFLGLSVVLAA), serve as a signal peptide directing secretion. A lipid anchor (N-palmitoyl cysteine) is attached at Cys-23. Cys-23 carries S-diacylglycerol cysteine lipidation. Residues 217–260 (AKANGETNQKGRKAAKSNKTALVQLKNGADTTTNEENKDTKTSD) are disordered. Over residues 251–260 (EENKDTKTSD) the composition is skewed to basic and acidic residues.

It belongs to the MG185/MG260 family.

The protein resides in the cell membrane. This is an uncharacterized protein from Mycoplasma pneumoniae (strain ATCC 29342 / M129 / Subtype 1) (Mycoplasmoides pneumoniae).